The primary structure comprises 407 residues: Flagellar calcium-binding protein TB-44A (407 aa).

A disordered region spans residues methionine 1–threonine 27. The 2 X 186 AA almost perfect repeats stretch occupies residues lysine 25–glutamate 399. Residues glutamate 48–leucine 83 form the EF-hand 1 domain. Aspartate 61, asparagine 63, threonine 65, lysine 67, and glutamate 72 together coordinate Ca(2+). The tract at residues glycine 110–glutamate 121 is ancestral calcium site 2. EF-hand domains follow at residues tyrosine 130–tryptophan 165, valine 167–glutamine 202, and glutamate 237–leucine 272. 13 residues coordinate Ca(2+): aspartate 143, aspartate 145, serine 147, glutamate 154, aspartate 180, asparagine 182, serine 184, glutamate 191, aspartate 250, asparagine 252, threonine 254, lysine 256, and glutamate 261. Positions glycine 299–glutamate 310 are ancestral calcium site 6. 2 consecutive EF-hand domains span residues tyrosine 319–tryptophan 354 and valine 356–glutamine 391. Positions 332, 334, 336, 343, 369, 371, 373, and 380 each coordinate Ca(2+).

It belongs to the calflagin family.

The protein localises to the cell projection. It is found in the cilium. The protein resides in the flagellum. Its function is as follows. May contribute to the rapid motility of the trypanosomes, playing a role either in flagellar structure or in calcium metabolism. Could alternate between a GDP-bound inactive form to a calcium/GTP-bound active form. In Trypanosoma brucei brucei, this protein is Flagellar calcium-binding protein TB-44A.